The following is a 345-amino-acid chain: Uroporphyrinogen decarboxylase (345 aa).

Substrate-binding positions include 26-30, phenylalanine 45, aspartate 75, tyrosine 151, serine 206, and histidine 320; that span reads RQAGR.

This sequence belongs to the uroporphyrinogen decarboxylase family. Homodimer.

Its subcellular location is the cytoplasm. The enzyme catalyses uroporphyrinogen III + 4 H(+) = coproporphyrinogen III + 4 CO2. The protein operates within porphyrin-containing compound metabolism; protoporphyrin-IX biosynthesis; coproporphyrinogen-III from 5-aminolevulinate: step 4/4. Catalyzes the decarboxylation of four acetate groups of uroporphyrinogen-III to yield coproporphyrinogen-III. This chain is Uroporphyrinogen decarboxylase, found in Staphylococcus carnosus (strain TM300).